Here is a 279-residue protein sequence, read N- to C-terminus: Acetylglutamate kinase (279 aa).

Substrate-binding positions include glycine 64 to glycine 65, arginine 86, and asparagine 177.

Belongs to the acetylglutamate kinase family. ArgB subfamily.

The protein resides in the cytoplasm. It carries out the reaction N-acetyl-L-glutamate + ATP = N-acetyl-L-glutamyl 5-phosphate + ADP. The protein operates within amino-acid biosynthesis; L-arginine biosynthesis; N(2)-acetyl-L-ornithine from L-glutamate: step 2/4. Its function is as follows. Catalyzes the ATP-dependent phosphorylation of N-acetyl-L-glutamate. The protein is Acetylglutamate kinase of Campylobacter jejuni subsp. jejuni serotype O:6 (strain 81116 / NCTC 11828).